A 551-amino-acid chain; its full sequence is RCC1 and BTB domain-containing protein 2 (551 aa).

RCC1 repeat units follow at residues Asn64–Thr115, Glu117–Ser169, Gly171–Asp222, Thr223–Asp274, Gly276–Thr326, and Gly328–Glu382. The BTB domain maps to Ala394–Pro457.

Its subcellular location is the cytoplasmic vesicle. It localises to the secretory vesicle. The protein resides in the acrosome. The sequence is that of RCC1 and BTB domain-containing protein 2 (RCBTB2) from Homo sapiens (Human).